The primary structure comprises 326 residues: tRNA-dihydrouridine(16) synthase (326 aa).

FMN is bound by residues 8–10 and Gln-69; that span reads PME. Cys-99 (proton donor) is an active-site residue. Residues Lys-140, 200 to 202, and 224 to 225 each bind FMN; these read NGE and GR.

Belongs to the Dus family. DusC subfamily. It depends on FMN as a cofactor.

It catalyses the reaction 5,6-dihydrouridine(16) in tRNA + NADP(+) = uridine(16) in tRNA + NADPH + H(+). The enzyme catalyses 5,6-dihydrouridine(16) in tRNA + NAD(+) = uridine(16) in tRNA + NADH + H(+). Its function is as follows. Catalyzes the synthesis of 5,6-dihydrouridine (D), a modified base found in the D-loop of most tRNAs, via the reduction of the C5-C6 double bond in target uridines. Specifically modifies U16 in tRNAs. The polypeptide is tRNA-dihydrouridine(16) synthase (Ralstonia nicotianae (strain ATCC BAA-1114 / GMI1000) (Ralstonia solanacearum)).